Consider the following 562-residue polypeptide: Nucleoprotein (562 aa).

The tract at residues 53–238 is binding site for the cap structure m7GTP; sequence MRRVKRDDSD…ITQEESQINI (186 aa). Mn(2+) is bound by residues D381 and E383. Positions 391, 498, 501, and 522 each coordinate Zn(2+). D526 contacts Mn(2+).

It belongs to the arenaviridae nucleocapsid protein family. In terms of assembly, homomultimerizes to form the nucleocapsid. Binds to viral genomic RNA. Interacts with glycoprotein G2. Interacts with protein Z; this interaction probably directs the encapsidated genome to budding sites. Interacts with protein L; this interaction does not interfere with Z-L interaction. Interacts with host IKBKE (via Protein kinase domain); the interaction inhibits IKBKE kinase activity.

The protein localises to the virion. It localises to the host cytoplasm. Encapsidates the genome, protecting it from nucleases. The encapsidated genomic RNA is termed the nucleocapsid (NC). Serves as template for viral transcription and replication. The increased presence of protein N in host cell does not seem to trigger the switch from transcription to replication as observed in other negative strain RNA viruses. Through the interaction with host IKBKE, strongly inhibits the phosphorylation and nuclear translocation of host IRF3, a protein involved in interferon activation pathway, leading to the inhibition of interferon-beta and IRF3-dependent promoters activation. Also encodes a functional 3'-5' exoribonuclease that degrades preferentially dsRNA substrates and thereby participates in the suppression of interferon induction. In Neotoma (wood rats), this protein is Nucleoprotein.